The sequence spans 386 residues: Adiponectin receptor protein 2 (386 aa).

A disordered region spans residues 1–72 (MNEPAKHRLG…ECHDDNSQED (72 aa)). Residues 1-147 (MNEPAKHRLG…SIFRIHTETG (147 aa)) are Cytoplasmic-facing. Over residues 15–31 (PEPDIRLRKGHQLDDTR) the composition is skewed to basic and acidic residues. A compositionally biased stretch (acidic residues) spans 58 to 72 (SPEEPECHDDNSQED). The helical transmembrane segment at 148-168 (NIWTHLLGCVFFLCLGIFYMF) threads the bilayer. The Extracellular portion of the chain corresponds to 169 to 181 (RPNISFVAPLQEK). A helical membrane pass occupies residues 182 to 202 (VVFGLFFLGAILCLSFSWLFH). His-202 serves as a coordination point for Zn(2+). Residues 203 to 213 (TVYCHSEGVSR) lie on the Cytoplasmic side of the membrane. Residues 214–234 (LFSKLDYSGIALLIMGSFVPW) traverse the membrane as a helical segment. Over 235-245 (LYYSFYCNPQP) the chain is Extracellular. The chain crosses the membrane as a helical span at residues 246-266 (CFIYLIVICVLGIAAIIVSQW). Over 267–273 (DMFATPQ) the chain is Cytoplasmic. A helical transmembrane segment spans residues 274 to 294 (YRGVRAGVFVGLGLSGIIPTL). Over 295 to 309 (HYVISEGFLKAATIG) the chain is Extracellular. The helical transmembrane segment at 310–330 (QIGWLMLMASLYITGAALYAA) threads the bilayer. Topologically, residues 331 to 348 (RIPERFFPGKCDIWFHSH) are cytoplasmic. Positions 348 and 352 each coordinate Zn(2+). The helical transmembrane segment at 349-369 (QLFHIFVVAGAFVHFHGVSNL) threads the bilayer. Residues 370 to 386 (QEFRFMIGGGCTEEDAL) are Extracellular-facing.

Belongs to the ADIPOR family. As to quaternary structure, may form homooligomers and heterooligomers with ADIPOR1. Interacts with APPL2 (via BAR domain); ADIPOQ dissociates this interaction. In terms of tissue distribution, detected in liver and quadriceps muscle (at protein level). Highly expressed in liver. Highly expressed in white adipose tissue, and at intermediate levels in brown adipose tissue. Expressed at intermediate level in heart, kidney, lung and skeletal muscle. Weakly expressed in brain, spleen and testis.

It localises to the cell membrane. Functionally, receptor for ADIPOQ, an essential hormone secreted by adipocytes that regulates glucose and lipid metabolism. Required for normal body fat and glucose homeostasis. ADIPOQ-binding activates a signaling cascade that leads to increased PPARA activity, and ultimately to increased fatty acid oxidation and glucose uptake. Has intermediate affinity for globular and full-length adiponectin. Required for normal revascularization after chronic ischemia caused by severing of blood vessels. This is Adiponectin receptor protein 2 from Mus musculus (Mouse).